The primary structure comprises 142 residues: MAKKVTAQVKLQIPAGKATPAPPVGTALGPQGVNIMDFCKAYNAKTSGKDQEGLIIPVVITIYSDRSFTFITKTPPVPVLIKRAVAIAKGSPEPHKTKVGKITQAQVEEIAKIKLPDLNCFDLDAAMRSVRGTARSMGVDVV.

This sequence belongs to the universal ribosomal protein uL11 family. Part of the ribosomal stalk of the 50S ribosomal subunit. Interacts with L10 and the large rRNA to form the base of the stalk. L10 forms an elongated spine to which L12 dimers bind in a sequential fashion forming a multimeric L10(L12)X complex. In terms of processing, one or more lysine residues are methylated.

Its function is as follows. Forms part of the ribosomal stalk which helps the ribosome interact with GTP-bound translation factors. The chain is Large ribosomal subunit protein uL11 from Solibacter usitatus (strain Ellin6076).